Here is a 151-residue protein sequence, read N- to C-terminus: Flagellar assembly factor FliW (151 aa).

This sequence belongs to the FliW family. As to quaternary structure, interacts with translational regulator CsrA and flagellin(s).

Its subcellular location is the cytoplasm. Its function is as follows. Acts as an anti-CsrA protein, binds CsrA and prevents it from repressing translation of its target genes, one of which is flagellin. Binds to flagellin and participates in the assembly of the flagellum. The sequence is that of Flagellar assembly factor FliW from Lachnospira eligens (strain ATCC 27750 / DSM 3376 / VPI C15-48 / C15-B4) (Eubacterium eligens).